The chain runs to 59 residues: Large ribosomal subunit protein uL30 (59 aa).

This sequence belongs to the universal ribosomal protein uL30 family. In terms of assembly, part of the 50S ribosomal subunit.

This Buchnera aphidicola subsp. Acyrthosiphon pisum (strain 5A) protein is Large ribosomal subunit protein uL30.